Consider the following 334-residue polypeptide: G2/mitotic-specific cyclin-1 (334 aa).

This sequence belongs to the cyclin family. Cyclin AB subfamily.

In terms of biological role, essential for the control of the cell cycle at the G2/M (mitosis) transition. In Trypanosoma brucei brucei, this protein is G2/mitotic-specific cyclin-1 (CYC1).